The following is a 728-amino-acid chain: 1,4-alpha-glucan branching enzyme GlgB (728 aa).

D405 serves as the catalytic Nucleophile. The active-site Proton donor is E458.

Belongs to the glycosyl hydrolase 13 family. GlgB subfamily. Monomer.

The catalysed reaction is Transfers a segment of a (1-&gt;4)-alpha-D-glucan chain to a primary hydroxy group in a similar glucan chain.. It participates in glycan biosynthesis; glycogen biosynthesis. Its function is as follows. Catalyzes the formation of the alpha-1,6-glucosidic linkages in glycogen by scission of a 1,4-alpha-linked oligosaccharide from growing alpha-1,4-glucan chains and the subsequent attachment of the oligosaccharide to the alpha-1,6 position. This Salmonella arizonae (strain ATCC BAA-731 / CDC346-86 / RSK2980) protein is 1,4-alpha-glucan branching enzyme GlgB.